The sequence spans 69 residues: MSNRQNGTVKWFNDAKGFGFITPESGNDLFVHFRSIQGTGFKSLQEGQKVSFVVVNGQKGLQADEVQVV.

In terms of domain architecture, CSD spans 7-66 (GTVKWFNDAKGFGFITPESGNDLFVHFRSIQGTGFKSLQEGQKVSFVVVNGQKGLQADEV).

It is found in the cytoplasm. In Pseudomonas aeruginosa (strain ATCC 15692 / DSM 22644 / CIP 104116 / JCM 14847 / LMG 12228 / 1C / PRS 101 / PAO1), this protein is Major cold shock protein CspA (cspA).